A 1053-amino-acid chain; its full sequence is Integrin alpha-3 (1053 aa).

The first 32 residues, 1–32 (MGPGPCRVPRAPGWLLRALALMVAACGRVAFA), serve as a signal peptide directing secretion. Topologically, residues 33–993 (FNLDTRFLVV…LVEELPAEIE (961 aa)) are extracellular. 7 FG-GAP repeats span residues 38–103 (RFLV…KDDC), 110–171 (EKSD…DLQL), 185–235 (CNSN…WDLS), 236–293 (EYSY…GGDL), 294–355 (QRKQ…ASFP), 357–412 (QPSL…GLLR), and 416–478 (QIIH…VARP). Asparagine 86 is a glycosylation site (N-linked (GlcNAc...) asparagine). 3 cysteine pairs are disulfide-bonded: cysteine 94–cysteine 103, cysteine 140–cysteine 162, and cysteine 185–cysteine 197. 2 cysteine pairs are disulfide-bonded: cysteine 486–cysteine 491 and cysteine 497–cysteine 551. Residues asparagine 501, asparagine 512, asparagine 574, and asparagine 606 are each glycosylated (N-linked (GlcNAc...) asparagine). A disulfide bridge connects residues cysteine 616 and cysteine 622. 4 N-linked (GlcNAc...) asparagine glycosylation sites follow: asparagine 657, asparagine 699, asparagine 843, and asparagine 859. A disulfide bond links cysteine 695 and cysteine 704. 2 cysteine pairs are disulfide-bonded: cysteine 848/cysteine 906 and cysteine 913/cysteine 918. The interval 865-890 (PGVTPLSPQRRRRQLDPGGDQSSPPV) is disordered. Asparagine 925, asparagine 928, asparagine 937, and asparagine 971 each carry an N-linked (GlcNAc...) asparagine glycan. A helical membrane pass occupies residues 994-1021 (LWLVLVAVGAGLLLLGLIILLLWKCGFF). Cysteine 1018 is lipidated: S-palmitoyl cysteine. The Cytoplasmic segment spans residues 1022–1053 (KRARTRALYEAKRQKAEMKSQPSETERLTDDY).

Belongs to the integrin alpha chain family. In terms of assembly, heterodimer of an alpha and a beta subunit. The alpha subunit is composed of a heavy and a light chain linked by a disulfide bond. Alpha-3 associates with beta-1. Interacts with HPS5. Interacts with FAP (seprase); the interaction occurs at the cell surface of invadopodia membrane in a collagen-dependent manner. As to expression, isoform 1 and isoform 2 are expressed in heart and brain. Only isoform 1 is detected in lung.

The protein resides in the cell membrane. The protein localises to the cell projection. Its subcellular location is the invadopodium membrane. It localises to the filopodium membrane. Its function is as follows. Integrin alpha-3/beta-1 is a receptor for fibronectin, laminin, collagen, epiligrin, thrombospondin and CSPG4. Integrin alpha-3/beta-1 provides a docking site for FAP (seprase) at invadopodia plasma membranes in a collagen-dependent manner and hence may participate in the adhesion, formation of invadopodia and matrix degradation processes, promoting cell invasion. Alpha-3/beta-1 may mediate with LGALS3 the stimulation by CSPG4 of endothelial cells migration. The protein is Integrin alpha-3 (Itga3) of Mus musculus (Mouse).